A 208-amino-acid chain; its full sequence is Cytochrome c oxidase assembly protein CtaG (208 aa).

The Cytoplasmic segment spans residues 1–19 (MKQRPTGPDTTPRNRRGFG). A helical; Signal-anchor for type II membrane protein membrane pass occupies residues 20–42 (RDTAVASVCGLVVALMVGASYAA). The Periplasmic portion of the chain corresponds to 43-208 (VPFYNWFCRV…SEAGPRQGAL (166 aa)).

Belongs to the COX11/CtaG family.

The protein localises to the cell inner membrane. Exerts its effect at some terminal stage of cytochrome c oxidase synthesis, probably by being involved in the insertion of the copper B into subunit I. This Rhodopseudomonas palustris (strain BisA53) protein is Cytochrome c oxidase assembly protein CtaG.